The chain runs to 1242 residues: DNA-directed RNA polymerase RPB2 homolog (1242 aa).

The C4-type zinc-finger motif lies at Cys1180–Cys1201.

The protein belongs to the RNA polymerase beta chain family. Part of the viral DNA-directed RNA polymerase that consists of 8 polII-like subunits (RPB1, RPB2, RPB3, RPB5, RPB6, RPB7, RPB9, RPB10), a capping enzyme and a termination factor.

Its subcellular location is the host cytoplasm. It is found in the virion. The catalysed reaction is RNA(n) + a ribonucleoside 5'-triphosphate = RNA(n+1) + diphosphate. Catalytic component of the DNA-directed RNA polymerase (RNAP) that catalyzes the transcription in the cytoplasm of viral DNA into RNA using the four ribonucleoside triphosphates as substrates. Forms the polymerase active center together with RPB1. Part of the core element with the central large cleft, the clamp element that moves to open and close the cleft and the jaws that are thought to grab the incoming DNA template. The protein is DNA-directed RNA polymerase RPB2 homolog of Ornithodoros (relapsing fever ticks).